A 280-amino-acid chain; its full sequence is Acetyl-coenzyme A carboxylase carboxyl transferase subunit beta (280 aa).

Positions 28–280 constitute a CoA carboxyltransferase N-terminal domain; that stretch reads LFLACPYCGA…IVRLHTAEAE (253 aa). Residues Cys-32, Cys-35, Cys-50, and Cys-53 each contribute to the Zn(2+) site. A C4-type zinc finger spans residues 32–53; sequence CPYCGAQMYNKQLGKYRVCAKC.

The protein belongs to the AccD/PCCB family. In terms of assembly, acetyl-CoA carboxylase is a heterohexamer composed of biotin carboxyl carrier protein (AccB), biotin carboxylase (AccC) and two subunits each of ACCase subunit alpha (AccA) and ACCase subunit beta (AccD). Zn(2+) serves as cofactor.

It localises to the cytoplasm. The enzyme catalyses N(6)-carboxybiotinyl-L-lysyl-[protein] + acetyl-CoA = N(6)-biotinyl-L-lysyl-[protein] + malonyl-CoA. The protein operates within lipid metabolism; malonyl-CoA biosynthesis; malonyl-CoA from acetyl-CoA: step 1/1. Functionally, component of the acetyl coenzyme A carboxylase (ACC) complex. Biotin carboxylase (BC) catalyzes the carboxylation of biotin on its carrier protein (BCCP) and then the CO(2) group is transferred by the transcarboxylase to acetyl-CoA to form malonyl-CoA. The chain is Acetyl-coenzyme A carboxylase carboxyl transferase subunit beta from Leuconostoc mesenteroides subsp. mesenteroides (strain ATCC 8293 / DSM 20343 / BCRC 11652 / CCM 1803 / JCM 6124 / NCDO 523 / NBRC 100496 / NCIMB 8023 / NCTC 12954 / NRRL B-1118 / 37Y).